Here is a 231-residue protein sequence, read N- to C-terminus: 2,3,4,5-tetrahydropyridine-2,6-dicarboxylate N-acetyltransferase (231 aa).

It belongs to the transferase hexapeptide repeat family. DapH subfamily.

It catalyses the reaction (S)-2,3,4,5-tetrahydrodipicolinate + acetyl-CoA + H2O = L-2-acetamido-6-oxoheptanedioate + CoA. It functions in the pathway amino-acid biosynthesis; L-lysine biosynthesis via DAP pathway; LL-2,6-diaminopimelate from (S)-tetrahydrodipicolinate (acetylase route): step 1/3. Functionally, catalyzes the transfer of an acetyl group from acetyl-CoA to tetrahydrodipicolinate. The polypeptide is 2,3,4,5-tetrahydropyridine-2,6-dicarboxylate N-acetyltransferase (Thermosipho melanesiensis (strain DSM 12029 / CIP 104789 / BI429)).